The primary structure comprises 293 residues: NAD-dependent protein deacetylase (293 aa).

The Deacetylase sirtuin-type domain maps to 1–284 (MTVAITQTGP…QPPDPLHTAT (284 aa)). Residues 27–47 (GAGCSTDSGIPDYRDLHGGWK) and 105–108 (QNVD) each bind NAD(+). Histidine 123 serves as the catalytic Proton acceptor. 4 residues coordinate Zn(2+): cysteine 131, cysteine 134, cysteine 182, and cysteine 185. NAD(+)-binding positions include 222–224 (GSS), 248–250 (NFG), and cysteine 266.

The protein belongs to the sirtuin family. Class II subfamily. The cofactor is Zn(2+).

It is found in the cytoplasm. The catalysed reaction is N(6)-acetyl-L-lysyl-[protein] + NAD(+) + H2O = 2''-O-acetyl-ADP-D-ribose + nicotinamide + L-lysyl-[protein]. NAD-dependent protein deacetylase which modulates the activities of several enzymes which are inactive in their acetylated form. In Xanthomonas campestris pv. campestris (strain B100), this protein is NAD-dependent protein deacetylase.